We begin with the raw amino-acid sequence, 358 residues long: Peptide chain release factor 1 (358 aa).

Gln233 is modified (N5-methylglutamine). Residues 282–306 (QRAASERSADRRGQVGSGDRSERVR) show a composition bias toward basic and acidic residues. The tract at residues 282-308 (QRAASERSADRRGQVGSGDRSERVRTY) is disordered.

Belongs to the prokaryotic/mitochondrial release factor family. Methylated by PrmC. Methylation increases the termination efficiency of RF1.

The protein resides in the cytoplasm. Peptide chain release factor 1 directs the termination of translation in response to the peptide chain termination codons UAG and UAA. This chain is Peptide chain release factor 1, found in Afipia carboxidovorans (strain ATCC 49405 / DSM 1227 / KCTC 32145 / OM5) (Oligotropha carboxidovorans).